The primary structure comprises 298 residues: Anamorsin homolog (298 aa).

The interval 1-143 is N-terminal SAM-like domain; the sequence is MTQLIITYQS…IKAEKPSWKP (143 aa). The interval 143-162 is linker; that stretch reads PEEGKVLVDDIDLEGSVPDI. [2Fe-2S] cluster contacts are provided by cysteine 175, cysteine 182, cysteine 185, and cysteine 187. The fe-S binding site A stretch occupies residues 175–187; that stretch reads CKSKERACNNCNC. [4Fe-4S] cluster is bound by residues cysteine 218, cysteine 221, cysteine 229, and cysteine 232. Short sequence motifs (cx2C motif) lie at residues 218-221 and 229-232; these read CGNC and CSGC. The fe-S binding site B stretch occupies residues 218 to 232; sequence CGNCYLGDAFRCSGC.

It belongs to the anamorsin family. Monomer. Requires [2Fe-2S] cluster as cofactor. [4Fe-4S] cluster is required as a cofactor.

The protein resides in the cytoplasm. The protein localises to the mitochondrion intermembrane space. In terms of biological role, component of the cytosolic iron-sulfur (Fe-S) protein assembly (CIA) machinery. Required for the maturation of extramitochondrial Fe-S proteins. Part of an electron transfer chain functioning in an early step of cytosolic Fe-S biogenesis, facilitating the de novo assembly of a [4Fe-4S] cluster on the cytosolic Fe-S scaffold complex. Electrons are transferred from NADPH via a FAD- and FMN-containing diflavin oxidoreductase. Together with the diflavin oxidoreductase, also required for the assembly of the diferric tyrosyl radical cofactor of ribonucleotide reductase (RNR), probably by providing electrons for reduction during radical cofactor maturation in the catalytic small subunit. This chain is Anamorsin homolog, found in Cryptosporidium hominis.